The primary structure comprises 349 residues: Phosphoribosylformylglycinamidine cyclo-ligase (349 aa).

The protein belongs to the AIR synthase family.

The protein resides in the cytoplasm. The catalysed reaction is 2-formamido-N(1)-(5-O-phospho-beta-D-ribosyl)acetamidine + ATP = 5-amino-1-(5-phospho-beta-D-ribosyl)imidazole + ADP + phosphate + H(+). It participates in purine metabolism; IMP biosynthesis via de novo pathway; 5-amino-1-(5-phospho-D-ribosyl)imidazole from N(2)-formyl-N(1)-(5-phospho-D-ribosyl)glycinamide: step 2/2. This Lactobacillus delbrueckii subsp. bulgaricus (strain ATCC 11842 / DSM 20081 / BCRC 10696 / JCM 1002 / NBRC 13953 / NCIMB 11778 / NCTC 12712 / WDCM 00102 / Lb 14) protein is Phosphoribosylformylglycinamidine cyclo-ligase.